The following is a 511-amino-acid chain: DELLA protein RGL1 (511 aa).

Basic and acidic residues predominate over residues 1-11; sequence MKREHNHRESS. Positions 1–20 are disordered; sequence MKREHNHRESSAGEGGSSSM. The DELLA motif motif lies at 32-36; the sequence is DELLV. Residues 54-58 carry the LEXLE motif motif; the sequence is LEQLE. The short motif at 73-77 is the VHYNP motif element; it reads VHYNP. The GRAS domain occupies 143-506; it reads LDSQETGVRL…RPLIATSAWR (364 aa). A leucine repeat I (LRI) region spans residues 150 to 204; sequence VRLVHALLACAEAVQQNNLKLADALVKHVGLLASSQAGAMRKVATYFAEGLARRI. The LxCxE motif signature appears at 157 to 161; the sequence is LACAE. The VHIID stretch occupies residues 223-288; it reads QIHFYESCPY…NGPPDFRLTG (66 aa). The short motif at 254 to 258 is the VHIID element; sequence VHVID. The tract at residues 298–330 is leucine repeat II (LRII); it reads EVGWKLGQLASTIGVNFEFKSIALNNLSDLKPE. Residues 341–427 are PFYRE; that stretch reads VAVNSVFELH…ELFLGRQILN (87 aa). Residues 349–353 carry the LXXLL motif motif; that stretch reads LHRLL. An SAW region spans residues 430–506; sequence ACEGEDRVER…RPLIATSAWR (77 aa).

It belongs to the GRAS family. DELLA subfamily. In terms of assembly, interacts directly with the GID2/SLY1 component of the SCF(GID2) complex. Interacts (via N-terminus) with GID1A, GID1B and GID1B (via N-terminus). Interacts with the BOI proteins BOI, BRG1, BRG2 and BRG3. Binds to and coactivates GAF1/IDD2 and ENY/IDD1. In terms of processing, phosphorylated. May be ubiquitinated, as suggested by its interaction with GID2. Ubiquitination is however unsure since in contrast to other DELLA proteins, it is not ubiquitinated and degraded upon GA application. Nevertheless, ubiquitination may be triggered by other processes. In terms of tissue distribution, predominantly expressed in germinating seeds and flowers and siliques. Highly expressed in inflorescences and weakly or not expressed in rosette leaves, etiolated seedlings, siliques, mature stems and roots. RGA and GAI transcripts were detected at slightly varying levels in all tissues examined. RGL2 signal was undetected, and RGL3 signal was very weak in all tissues examined (rosette leaves, seedlings, inflorescences, and siliques) except inflorescences. In the flower, it is expressed in developing ovules as well as in developing anthers throughout microspore development.

It localises to the nucleus. Functionally, probable transcriptional regulator that acts as a repressor of the gibberellin (GA) signaling pathway. No effect of the BOI proteins on its stability. Probably acts by participating in large multiprotein complexes that repress transcription of GA-inducible genes. Has overlapping but distinct roles in GA signaling compared to RGA and GAI. Regulates the floral development. May also participate in seed germination and in ovule and anther development. Its activity is probably regulated by other phytohormones such as auxin and ethylene. The chain is DELLA protein RGL1 (RGL1) from Arabidopsis thaliana (Mouse-ear cress).